The chain runs to 139 residues: uncharacterized protein (139 aa).

Transmembrane regions (helical) follow at residues 35-55 (LVFL…SFLI) and 57-77 (FGIL…LTVI).

The protein resides in the membrane. This is an uncharacterized protein from Saccharomyces cerevisiae (strain ATCC 204508 / S288c) (Baker's yeast).